Reading from the N-terminus, the 164-residue chain is Protein DOWNSTREAM OF FLC (164 aa).

A signal peptide spans 1 to 23 (MAKSFVPLIAVLCVLVLPLAAMA). 3 cysteine pairs are disulfide-bonded: cysteine 36–cysteine 107, cysteine 39–cysteine 148, and cysteine 60–cysteine 95.

This sequence belongs to the Ole e I family.

It localises to the secreted. Functionally, part of a three-gene cluster containing FLC, UFC and DFC, which is coordinately regulated in response to vernalization. Not regulated by FLX. In Arabidopsis thaliana (Mouse-ear cress), this protein is Protein DOWNSTREAM OF FLC (DFC).